The primary structure comprises 319 residues: Thioredoxin reductase (319 aa).

Position 36–43 (36–43) interacts with FAD; the sequence is TGTNKGGQ. A disulfide bridge links C136 with C139. An FAD-binding site is contributed by 288 to 297; it reads DVIDHVYRQA.

This sequence belongs to the class-II pyridine nucleotide-disulfide oxidoreductase family. Homodimer. FAD is required as a cofactor.

It localises to the cytoplasm. The catalysed reaction is [thioredoxin]-dithiol + NADP(+) = [thioredoxin]-disulfide + NADPH + H(+). The sequence is that of Thioredoxin reductase (trxB) from Buchnera aphidicola subsp. Acyrthosiphon pisum (strain APS) (Acyrthosiphon pisum symbiotic bacterium).